A 139-amino-acid polypeptide reads, in one-letter code: Large ribosomal subunit protein uL16 (139 aa).

Basic residues predominate over residues 1-16 (MLIPKRTKYRKQHRPD). The interval 1–23 (MLIPKRTKYRKQHRPDRHGMSKG) is disordered.

Belongs to the universal ribosomal protein uL16 family. In terms of assembly, part of the 50S ribosomal subunit.

Binds 23S rRNA and is also seen to make contacts with the A and possibly P site tRNAs. This is Large ribosomal subunit protein uL16 from Bifidobacterium animalis subsp. lactis (strain AD011).